A 569-amino-acid chain; its full sequence is Probable diguanylate cyclase DgcQ (569 aa).

A run of 2 helical transmembrane segments spans residues 25 to 45 (LGPG…STLL) and 365 to 385 (IALT…WYVI). Residues 433-568 (HPFSVIQVDL…GRNRVCASDN (136 aa)) enclose the GGDEF domain. Mg(2+) is bound at residue D441. Residues N449, H454, and D458 each coordinate substrate. E484 serves as a coordination point for Mg(2+). E484 serves as the catalytic Proton acceptor.

Homodimer. It depends on Mg(2+) as a cofactor.

Its subcellular location is the cell inner membrane. It catalyses the reaction 2 GTP = 3',3'-c-di-GMP + 2 diphosphate. The protein operates within glycan metabolism; bacterial cellulose biosynthesis. Its pathway is purine metabolism; 3',5'-cyclic di-GMP biosynthesis. Catalyzes the synthesis of cyclic-di-GMP (c-di-GMP) via the condensation of 2 GTP molecules. Cyclic-di-GMP is a second messenger which controls cell surface-associated traits in bacteria. Involved in the regulation of cellulose production. The sequence is that of Probable diguanylate cyclase DgcQ from Shigella sonnei (strain Ss046).